Consider the following 465-residue polypeptide: Ribosomal protein uS12 methylthiotransferase RimO (465 aa).

One can recognise an MTTase N-terminal domain in the interval 1 to 117 (MKVGFISLGC…IVDICEGMPP (117 aa)). 6 residues coordinate [4Fe-4S] cluster: Cys-10, Cys-46, Cys-80, Cys-150, Cys-154, and Cys-157. The Radical SAM core domain maps to 136 to 369 (ATPRHFAYMK…AIQRKIARAR (234 aa)). The region spanning 371-442 (RGLVGKEVPV…DYDVVGTLLA (72 aa)) is the TRAM domain.

This sequence belongs to the methylthiotransferase family. RimO subfamily. The cofactor is [4Fe-4S] cluster.

It is found in the cytoplasm. It catalyses the reaction L-aspartate(89)-[ribosomal protein uS12]-hydrogen + (sulfur carrier)-SH + AH2 + 2 S-adenosyl-L-methionine = 3-methylsulfanyl-L-aspartate(89)-[ribosomal protein uS12]-hydrogen + (sulfur carrier)-H + 5'-deoxyadenosine + L-methionine + A + S-adenosyl-L-homocysteine + 2 H(+). In terms of biological role, catalyzes the methylthiolation of an aspartic acid residue of ribosomal protein uS12. This chain is Ribosomal protein uS12 methylthiotransferase RimO, found in Solibacter usitatus (strain Ellin6076).